The chain runs to 351 residues: DNA polymerase IV (351 aa).

The 182-residue stretch at 4–185 (IIHVDMDCFF…LPLAKIPGVG (182 aa)) folds into the UmuC domain. Residues D8 and D103 each contribute to the Mg(2+) site. E104 is a catalytic residue.

It belongs to the DNA polymerase type-Y family. As to quaternary structure, monomer. The cofactor is Mg(2+).

Its subcellular location is the cytoplasm. It catalyses the reaction DNA(n) + a 2'-deoxyribonucleoside 5'-triphosphate = DNA(n+1) + diphosphate. Functionally, poorly processive, error-prone DNA polymerase involved in untargeted mutagenesis. Copies undamaged DNA at stalled replication forks, which arise in vivo from mismatched or misaligned primer ends. These misaligned primers can be extended by PolIV. Exhibits no 3'-5' exonuclease (proofreading) activity. May be involved in translesional synthesis, in conjunction with the beta clamp from PolIII. In Salmonella arizonae (strain ATCC BAA-731 / CDC346-86 / RSK2980), this protein is DNA polymerase IV.